The primary structure comprises 384 residues: Glycerol 3-phosphate oxidase (384 aa).

The signal sequence occupies residues 1 to 15; the sequence is METRDVLIVGGGVIG. An FAD-binding site is contributed by I14. C16 is lipidated: N-palmitoyl cysteine. C16 carries the S-diacylglycerol cysteine lipid modification. FAD-binding positions include E33, 42–43, and 47–49; these read TS and SGV. The sn-glycerol 3-phosphate site is built by S47 and H51. The active-site Proton acceptor is H51. V177 contributes to the FAD binding site. Residues K258 and R320 each coordinate sn-glycerol 3-phosphate. Residue 346 to 347 participates in FAD binding; that stretch reads MK. S348 contacts sn-glycerol 3-phosphate. T352 provides a ligand contact to FAD.

Monomer. The cofactor is FAD.

The protein resides in the cytoplasm. The protein localises to the cell membrane. The catalysed reaction is sn-glycerol 3-phosphate + O2 = dihydroxyacetone phosphate + H2O2. It participates in polyol metabolism; glycerol degradation via glycerol kinase pathway; glycerone phosphate from sn-glycerol 3-phosphate (aerobic route): step 1/1. Functionally, catalyzes the oxidation of glycerol 3-phosphate to dihydroxyacetone phosphate (DHAP), with a reduction of O2 to H2O2. The formation of hydrogen peroxide by this enzyme is crucial for cytotoxic effects of M.pneumoniae on host cells. Is involved in the metabolism of glycerol and is essential for glycerol utilization; glycerol is one of the few carbon sources that can be utilized by M.pneumoniae for growth. To a lesser extent, is also able to use glyceraldehyde 3-phosphate (GAP), an intermediate in the glycolysis pathway, as a substrate (but the structure of the product has not been elucidated). Therefore, in the absence of glycerol, GAP may serve as a substrate in the GlpO reaction to supply H2O2 during mycoplasma infection. Does not show any dehydrogenase activity with NAD(+). In Mycoplasma pneumoniae (strain ATCC 29342 / M129 / Subtype 1) (Mycoplasmoides pneumoniae), this protein is Glycerol 3-phosphate oxidase.